Here is a 293-residue protein sequence, read N- to C-terminus: Elongation factor Ts (293 aa).

The tract at residues 81–84 (TDFV) is involved in Mg(2+) ion dislocation from EF-Tu.

The protein belongs to the EF-Ts family.

The protein resides in the cytoplasm. Functionally, associates with the EF-Tu.GDP complex and induces the exchange of GDP to GTP. It remains bound to the aminoacyl-tRNA.EF-Tu.GTP complex up to the GTP hydrolysis stage on the ribosome. The chain is Elongation factor Ts from Teredinibacter turnerae (strain ATCC 39867 / T7901).